The sequence spans 560 residues: Platelet glycoprotein V (560 aa).

An N-terminal signal peptide occupies residues 1–16; the sequence is MLRGTLLCAVLGLLRA. The region spanning 17-50 is the LRRNT domain; it reads QPFPCPPACKCVFRDAAQCSGGDVARISALGLPT. Over 17–523 the chain is Extracellular; that stretch reads QPFPCPPACK…KGQDHSPFWG (507 aa). N-linked (GlcNAc...) asparagine glycosylation is present at N51. LRR repeat units follow at residues 75-96, 99-120, 123-144, 147-168, 171-193, 195-216, 219-240, 243-264, 267-288, 291-312, 340-361, 364-385, and 388-409; these read VLQR…TFSD, KLKT…LLDK, LLEQ…MFQK, NLQE…LFTN, NLKL…LGAQ, KLER…LLNS, ALTE…AFDR, NLSS…LFLH, NLTL…LFGE, GLQE…AFRN, ELQV…LLRG, KLRQ…LFRN, and SLES…VFGA. N181 is a glycosylation site (N-linked (GlcNAc...) (complex) asparagine). N243 is a glycosylation site (N-linked (GlcNAc...) (complex) asparagine). 3 N-linked (GlcNAc...) asparagine glycosylation sites follow: N267, N298, and N312. N-linked (GlcNAc...) asparagine glycosylation occurs at N385. One can recognise an LRRCT domain in the interval 421–474; that stretch reads NSWRCDCGLGPFLGWLRQHLGLVGGEEPPRCAGPGAHAGLPLWALPGGDAECPG. The segment at 469–498 is disordered; sequence DAECPGPRGPPPRPAADSSSEAPVHPALAP. N499 carries an N-linked (GlcNAc...) asparagine glycan. A helical transmembrane segment spans residues 524–544; it reads FYFLLLAVQAMITVIIVFAMI. The Cytoplasmic segment spans residues 545 to 560; that stretch reads KIGQLFRKLIRERALG.

In terms of processing, the N-terminus is blocked. Platelets and megakaryocytes.

It is found in the membrane. Functionally, the GPIb-V-IX complex functions as the vWF receptor and mediates vWF-dependent platelet adhesion to blood vessels. The adhesion of platelets to injured vascular surfaces in the arterial circulation is a critical initiating event in hemostasis. The chain is Platelet glycoprotein V (GP5) from Homo sapiens (Human).